We begin with the raw amino-acid sequence, 325 residues long: MSDTASWQPSAPIANLLKRAAIMAEIRRFFADRGVLEVETPTMSQATVTDIHLVPFETRFVGPGAADGLTLYMMTSPEYHMKRLLAAGSGPIYQLGRSFRNEEAGRYHNPEFTMLEWYRPHYDMYRLMNEVDDLLQQILDCNSAETLSYQQAFLRHLNIDPLSAEKAQLREVAAKLDLSNIADTEEDRDTLLQLLFTVGVEPYIGRDKPAFIYHFPASQASLAEISTEDHRVAERFEVYFKGIELANGFRELTDGDEQLQRFEQDNRNRAKRGLPQNPIDMNLIAALKQGLPDCSGVALGVDRLVMLALNAERLSDVIAFPVNIA.

Ser-76 to Glu-78 contacts substrate. Residues Arg-100 to Glu-102 and Asn-109 contribute to the ATP site. Tyr-118 provides a ligand contact to substrate. Glu-244–Leu-245 contacts ATP. Glu-251 is a binding site for substrate. Gly-300 is an ATP binding site.

The protein belongs to the class-II aminoacyl-tRNA synthetase family. EpmA subfamily. Homodimer.

The enzyme catalyses D-beta-lysine + L-lysyl-[protein] + ATP = N(6)-((3R)-3,6-diaminohexanoyl)-L-lysyl-[protein] + AMP + diphosphate + H(+). Functionally, with EpmB is involved in the beta-lysylation step of the post-translational modification of translation elongation factor P (EF-P). Catalyzes the ATP-dependent activation of (R)-beta-lysine produced by EpmB, forming a lysyl-adenylate, from which the beta-lysyl moiety is then transferred to the epsilon-amino group of a conserved specific lysine residue in EF-P. The polypeptide is Elongation factor P--(R)-beta-lysine ligase (Yersinia pseudotuberculosis serotype O:1b (strain IP 31758)).